Reading from the N-terminus, the 30-residue chain is Thrombin-like enzyme LmrSP-2 (30 aa).

It belongs to the peptidase S1 family. Snake venom subfamily. As to expression, expressed by the venom gland.

It localises to the secreted. Thrombin-like snake venom serine protease that cleaves alpha-chain of fibrinogen (FGA) releases only fibrinopeptide A. Shows coagulant, esterase and amidase activities. The chain is Thrombin-like enzyme LmrSP-2 from Lachesis muta rhombeata (Bushmaster).